The primary structure comprises 469 residues: MNPNQKIITIGSVSLTIATACFLMQIAILATTVTLHFKQNECSIPANNQVVPCEPIVIERNITEIVYLNNTTIEKEICPEVVEYRNWSKPQCQITGFAPFSKDNSIRLSAGGDIWVTREPYVSCDPSKCYQFALGQGTTLDNKHSNGTIHDRIPHRTLLMNELGVPFHLGTKQVCIAWSSSSCHDGKAWLHVCVTGDDRNATASFIYDGMLVDSIGSWSQNILRTQESECVCINGTCTVVMTDGSASGRADTRILFIREGKIVHISPLSGSAQHIEECSCYPRYPNVRCVCRDNWKGSNRPVIDINMADYSIDSSYVCSGLVGDTPRNDDSSSSSNCRDPNNERGNPGVKGWAFDNGNDVWMGRTISKDSRSGYETFRVIGGWATANSKSQTNRQVIVDNNNWSGYSGIFSVESKSCINRCFYVELIRGRPQETRVWWTSNSIVVFCGTSGTYGTGSWPDGANINFMPI.

The Intravirion segment spans residues 1–6; that stretch reads MNPNQK. Residues 7–29 form a helical membrane-spanning segment; sequence IITIGSVSLTIATACFLMQIAIL. Residues 11–33 are involved in apical transport and lipid raft association; it reads GSVSLTIATACFLMQIAILATTV. Residues 30 to 469 lie on the Virion surface side of the membrane; the sequence is ATTVTLHFKQ…DGANINFMPI (440 aa). Residues 36–88 form a hypervariable stalk region region; sequence HFKQNECSIPANNQVVPCEPIVIERNITEIVYLNNTTIEKEICPEVVEYRNWS. 4 N-linked (GlcNAc...) asparagine; by host glycosylation sites follow: Asn-61, Asn-69, Asn-70, and Asn-86. The head of neuraminidase stretch occupies residues 91-469; it reads QCQITGFAPF…DGANINFMPI (379 aa). Intrachain disulfides connect Cys-92–Cys-417, Cys-124–Cys-129, Cys-183–Cys-230, Cys-232–Cys-237, Cys-278–Cys-291, Cys-280–Cys-289, Cys-318–Cys-337, and Cys-421–Cys-447. Residue Arg-118 participates in substrate binding. The N-linked (GlcNAc...) asparagine; by host glycan is linked to Asn-146. Asp-151 serves as the catalytic Proton donor/acceptor. Arg-152 is a substrate binding site. N-linked (GlcNAc...) asparagine; by host glycans are attached at residues Asn-200 and Asn-234. 276-277 contacts substrate; that stretch reads EE. A substrate-binding site is contributed by Arg-292. Ca(2+)-binding residues include Asp-293, Gly-297, and Asp-324. Positions 325-349 are disordered; that stretch reads TPRNDDSSSSSNCRDPNNERGNPGV. Arg-371 lines the substrate pocket. The N-linked (GlcNAc...) asparagine; by host glycan is linked to Asn-402. The Nucleophile role is filled by Tyr-406.

The protein belongs to the glycosyl hydrolase 34 family. As to quaternary structure, homotetramer. It depends on Ca(2+) as a cofactor. N-glycosylated.

The protein localises to the virion membrane. Its subcellular location is the host apical cell membrane. The enzyme catalyses Hydrolysis of alpha-(2-&gt;3)-, alpha-(2-&gt;6)-, alpha-(2-&gt;8)- glycosidic linkages of terminal sialic acid residues in oligosaccharides, glycoproteins, glycolipids, colominic acid and synthetic substrates.. Its activity is regulated as follows. Inhibited by the neuraminidase inhibitors zanamivir (Relenza) and oseltamivir (Tamiflu). These drugs interfere with the release of progeny virus from infected cells and are effective against all influenza strains. Resistance to neuraminidase inhibitors is quite rare. Its function is as follows. Catalyzes the removal of terminal sialic acid residues from viral and cellular glycoconjugates. Cleaves off the terminal sialic acids on the glycosylated HA during virus budding to facilitate virus release. Additionally helps virus spread through the circulation by further removing sialic acids from the cell surface. These cleavages prevent self-aggregation and ensure the efficient spread of the progeny virus from cell to cell. Otherwise, infection would be limited to one round of replication. Described as a receptor-destroying enzyme because it cleaves a terminal sialic acid from the cellular receptors. May facilitate viral invasion of the upper airways by cleaving the sialic acid moieties on the mucin of the airway epithelial cells. Likely to plays a role in the budding process through its association with lipid rafts during intracellular transport. May additionally display a raft-association independent effect on budding. Plays a role in the determination of host range restriction on replication and virulence. Sialidase activity in late endosome/lysosome traffic seems to enhance virus replication. This is Neuraminidase from Aves.